The sequence spans 280 residues: RAD52 motif-containing protein 1 (280 aa).

Residues lysine 18–lysine 101 form the RRM domain.

As to quaternary structure, homodimer.

It is found in the nucleus. Its subcellular location is the cytoplasm. It localises to the nucleolus. May confer resistance to the antitumor agent cisplatin. Binds to DNA and RNA. This is RAD52 motif-containing protein 1 (rdm1) from Danio rerio (Zebrafish).